Consider the following 361-residue polypeptide: MAGNTIGQLFRVTTFGESHGLALGCIVDGVPPGIPLTEADLQHDLDRRRPGTSRYTTQRREPDQVKILSGVFEGVTTGTSIGLLIENTDQRSQDYSAIKDVFRPGHADYTYEQKYGLRDYRGGGRSSARETAMRVAAGAIAKKYLAEKFGIEIRGCLTQMGDIPLEIKDWSQVEQNPFFCPDPDKIDALDELMRALKKEGDSIGAKVTVVASGVPAGLGEPVFDRLDADIAHALMSINAVKGVEIGDGFDVVALRGSQNRDEITKDGFQSNHAGGILGGISSGQKIIAHMALKPTSSITVPGRTINRFGEEVEMITKGRHDPCVGIRAVPIAEAMLAIVLMDHLLRQRAQNADVKTDIPRW.

Arg48 and Arg54 together coordinate NADP(+). FMN contacts are provided by residues 125 to 127, 238 to 239, Gly278, 293 to 297, and Arg319; these read RSS, NA, and KPTSS.

Belongs to the chorismate synthase family. In terms of assembly, homotetramer. Requires FMNH2 as cofactor.

It catalyses the reaction 5-O-(1-carboxyvinyl)-3-phosphoshikimate = chorismate + phosphate. Its pathway is metabolic intermediate biosynthesis; chorismate biosynthesis; chorismate from D-erythrose 4-phosphate and phosphoenolpyruvate: step 7/7. Its function is as follows. Catalyzes the anti-1,4-elimination of the C-3 phosphate and the C-6 proR hydrogen from 5-enolpyruvylshikimate-3-phosphate (EPSP) to yield chorismate, which is the branch point compound that serves as the starting substrate for the three terminal pathways of aromatic amino acid biosynthesis. This reaction introduces a second double bond into the aromatic ring system. The protein is Chorismate synthase of Escherichia coli O1:K1 / APEC.